We begin with the raw amino-acid sequence, 767 residues long: MPVFTASFQCVTLFGQPASAADAQPLLQGQRPFLHLHARRRRPCGPMLISKSPPYPASEETREWEAEGQHEHTDELRETTTTMIDGIRTALRSIGEGEISISAYDTSLVALLKRLDGGDGPQFPSTIDWIVQNQLPDGSWGDASFFMMGDRIMSTLACVVALKSWNIHTDKCERGLLFIQENMWRLAHEEEDWMLVGFEIALPSLLDMAKDLDLDIPYDEPALKAIYAERERKLAKIPRDVLHAMPTTLLHSLEGMVDLDWEKLLKLRCLDGSFHCSPASTATAFQQTGDQKCFEYLDGIVKKFNGGVPCIYPLDVYERLWAVDRLTRLGISRHFTSEIEDCLDYIFRNWTPDGLAHTKNCPVKDIDDTAMGFRLLRLYGYQVDPCVLKKFEKDGKFFCLHGESNPSSVTPMYNTYRASQLKFPGDDGVLGRAEVFCRSFLQDRRGSNRMKDKWAIAKDIPGEVEYAMDYPWKASLPRIETRLYLDQYGGSGDVWIGKVLHRMTLFCNDLYLKAAKADFSNFQKECRVELNGLRRWYLRSNLERFGGTDPQTTLMTSYFLASANIFEPNRAAERLGWARVALLADAVSSHFRRIGGPKNLTSNLEELISLVPFDDAYSGSLREAWKQWLMAWTAKESSQESIEGDTAILLVRAIEIFGGRHVLTGQRPDLWEYSQLEQLTSSICRKLYRRVLAQENGKSTEKVEEIDQQLDLEMQELTRRVLQGCSAINRLTRETFLHVVKSFCYVAYCSPETIDNHIDKVIFQDVI.

The disordered stretch occupies residues 45–74 (GPMLISKSPPYPASEETREWEAEGQHEHTD). Positions 59–74 (EETREWEAEGQHEHTD) are enriched in basic and acidic residues. Lysine 233 serves as a coordination point for substrate. 2 residues coordinate Mg(2+): aspartate 365 and aspartate 367. A DXDD motif motif is present at residues 365-368 (DIDD). A substrate-binding site is contributed by lysine 453.

Mg(2+) is required as a cofactor.

The catalysed reaction is (2E,6E,10E)-geranylgeranyl diphosphate = 9alpha-copalyl diphosphate. Catalyzes the conversion of geranylgeranyl diphosphate to the phytoalexin precursor syn-copalyl diphosphate. The chain is Syn-copalyl diphosphate synthase (CPS4) from Oryza sativa subsp. indica (Rice).